The sequence spans 247 residues: 5-oxoprolinase subunit A (247 aa).

It belongs to the LamB/PxpA family. In terms of assembly, forms a complex composed of PxpA, PxpB and PxpC.

It catalyses the reaction 5-oxo-L-proline + ATP + 2 H2O = L-glutamate + ADP + phosphate + H(+). In terms of biological role, catalyzes the cleavage of 5-oxoproline to form L-glutamate coupled to the hydrolysis of ATP to ADP and inorganic phosphate. The polypeptide is 5-oxoprolinase subunit A (Vibrio vulnificus (strain CMCP6)).